Here is a 1653-residue protein sequence, read N- to C-terminus: Clathrin heavy chain (1653 aa).

The segment at 1-483 (MSDLPIEFTE…FDTTLALACY (483 aa)) is globular terminal domain. WD40-like repeat stretches follow at residues 23-66 (FLDF…KNMG), 67-107 (GDSA…LDEP), 108-152 (VIFW…ANLN), 153-198 (NTQI…QAID), 199-263 (GHVA…PDAT), 264-307 (NDFP…ITAE), and 308-336 (SVFT…VEIS). Residues 453–469 (EKWLKEDKLECSEELGD) are binding site for the uncoating ATPase, involved in lattice disassembly. The tract at residues 484 to 527 (LRAGAHAKVISCLAELQQFEKIIPYCQKVGYQPNFLVLISSLIR) is flexible linker. Residues 528–1653 (SSPDRASEFA…SAMNVQPTGF (1126 aa)) are heavy chain arm. 7 CHCR repeats span residues 543–689 (NPET…QTVV), 692–834 (ATKF…DEAF), 839–978 (LQSV…QLID), 985–1130 (IPEL…IPDA), 1134–1275 (YIKA…FKLA), 1280–1426 (LNLI…SLLV), and 1429–1572 (LTSL…REGF). Residue lysine 1107 forms a Glycyl lysine isopeptide (Lys-Gly) (interchain with G-Cter in ubiquitin) linkage. The tract at residues 1219-1528 (AARLCYSAVS…LLYRRNKKWA (310 aa)) is involved in binding clathrin light chain.

Belongs to the clathrin heavy chain family. As to quaternary structure, clathrin triskelions, composed of 3 heavy chains and 3 light chains, are the basic subunits of the clathrin coat. Interacts with the auxilin-like clathrin uncoating factor SWA2. Interacts with INP53.

The protein localises to the cytoplasmic vesicle membrane. The protein resides in the membrane. It localises to the coated pit. Its function is as follows. Clathrin is the major protein of the polyhedral coat of coated pits and vesicles. In yeast, it is involved in the retention of proteins in an intracellular membrane compartment, presumably the trans-Golgi. The protein is Clathrin heavy chain (CHC1) of Saccharomyces cerevisiae (strain ATCC 204508 / S288c) (Baker's yeast).